A 100-amino-acid chain; its full sequence is uncharacterized protein (100 aa).

This is an uncharacterized protein from Clostridium tetanomorphum.